The chain runs to 291 residues: MEMO1 family protein TON_0132 (291 aa).

The protein belongs to the MEMO1 family.

This Thermococcus onnurineus (strain NA1) protein is MEMO1 family protein TON_0132.